The following is a 193-amino-acid chain: dCTP deaminase (193 aa).

DCTP is bound by residues 110-115 (RSSLAR), Asp128, 136-138 (VLE), Tyr171, Lys178, and Gln182. Catalysis depends on Glu138, which acts as the Proton donor/acceptor. The disordered stretch occupies residues 168-193 (DRPYNRRQDAKYKNQQGAVSSRIDED). A compositionally biased stretch (basic and acidic residues) spans 170-179 (PYNRRQDAKY).

This sequence belongs to the dCTP deaminase family. As to quaternary structure, homotrimer.

The catalysed reaction is dCTP + H2O + H(+) = dUTP + NH4(+). Its pathway is pyrimidine metabolism; dUMP biosynthesis; dUMP from dCTP (dUTP route): step 1/2. In terms of biological role, catalyzes the deamination of dCTP to dUTP. The protein is dCTP deaminase of Photorhabdus laumondii subsp. laumondii (strain DSM 15139 / CIP 105565 / TT01) (Photorhabdus luminescens subsp. laumondii).